Here is an 898-residue protein sequence, read N- to C-terminus: DNA damage-induced apoptosis suppressor protein (898 aa).

Disordered stretches follow at residues 191–210 (CGSQ…DSDL), 643–670 (SINT…HEGS), and 710–749 (YPIN…FEES). Polar residues-rich tracts occupy residues 643-664 (SINT…PSSS) and 710-725 (YPIN…KPSL). Over residues 726 to 741 (QSISPSRYSRPRSQSD) the composition is skewed to low complexity.

In terms of tissue distribution, highly expressed in the testis, spleen and heart. Expressed at high levels in the primary spermatocytes and to a lesser extent in the round spermatids. Also found in the bone marrow, brain, lung, kidney and liver.

The protein resides in the cytoplasm. Its subcellular location is the nucleus. Its function is as follows. May be an anti-apoptotic protein involved in DNA repair or cell survival. The sequence is that of DNA damage-induced apoptosis suppressor protein (Ddias) from Mus musculus (Mouse).